Here is a 333-residue protein sequence, read N- to C-terminus: Beta-ketoacyl-[acyl-carrier-protein] synthase III (333 aa).

Residues cysteine 112 and histidine 255 contribute to the active site. Residues 256–260 (QANQR) are ACP-binding. The active site involves asparagine 285.

It belongs to the thiolase-like superfamily. FabH family. As to quaternary structure, homodimer.

It localises to the cytoplasm. The catalysed reaction is malonyl-[ACP] + acetyl-CoA + H(+) = 3-oxobutanoyl-[ACP] + CO2 + CoA. Its pathway is lipid metabolism; fatty acid biosynthesis. In terms of biological role, catalyzes the condensation reaction of fatty acid synthesis by the addition to an acyl acceptor of two carbons from malonyl-ACP. Catalyzes the first condensation reaction which initiates fatty acid synthesis and may therefore play a role in governing the total rate of fatty acid production. Possesses both acetoacetyl-ACP synthase and acetyl transacylase activities. Its substrate specificity determines the biosynthesis of branched-chain and/or straight-chain of fatty acids. This is Beta-ketoacyl-[acyl-carrier-protein] synthase III from Synechococcus sp. (strain RCC307).